We begin with the raw amino-acid sequence, 504 residues long: Glycerol kinase (504 aa).

Position 12 (Thr12) interacts with ADP. 3 residues coordinate ATP: Thr12, Thr13, and Ser14. Thr12 serves as a coordination point for sn-glycerol 3-phosphate. Arg16 contributes to the ADP binding site. Sn-glycerol 3-phosphate-binding residues include Arg82, Glu83, Tyr134, and Asp246. Glycerol is bound by residues Arg82, Glu83, Tyr134, Asp246, and Gln247. 2 residues coordinate ADP: Thr268 and Gly312. Residues Thr268, Gly312, Gln316, and Gly413 each coordinate ATP. Gly413 and Asn417 together coordinate ADP.

It belongs to the FGGY kinase family.

The enzyme catalyses glycerol + ATP = sn-glycerol 3-phosphate + ADP + H(+). The protein operates within polyol metabolism; glycerol degradation via glycerol kinase pathway; sn-glycerol 3-phosphate from glycerol: step 1/1. Inhibited by fructose 1,6-bisphosphate (FBP). Functionally, key enzyme in the regulation of glycerol uptake and metabolism. Catalyzes the phosphorylation of glycerol to yield sn-glycerol 3-phosphate. In Renibacterium salmoninarum (strain ATCC 33209 / DSM 20767 / JCM 11484 / NBRC 15589 / NCIMB 2235), this protein is Glycerol kinase.